The primary structure comprises 384 residues: Na(+)/H(+) antiporter NhaA (384 aa).

The next 11 membrane-spanning stretches (helical) occupy residues 7–27 (FYNLETIGGILLFIAAVLAII), 58–78 (LLLWINDGLMAIYFLLIGLEI), 94–114 (LVPALTALAGLLFPALIFIFF), 124–144 (GWAIPTATDIAFTLGIVSLLG), 153–173 (ILLTAIAIFDDIAAIVIIALF), 179–199 (SLLSLSLALVFTLILIGLNYF), 204–224 (ISVFMLFGVALWIAVLKSGVH), 256–276 (VVFLILPLFAFANAGVSFVGL), 285–305 (VVLGIGLGLFLGKQLGIFLSL), 325–345 (VYGIALICGVGFTMSLFIGSL), and 357–377 (MVKIGVVFGSFIAGLTGFLVL).

The protein belongs to the NhaA Na(+)/H(+) (TC 2.A.33) antiporter family.

The protein localises to the cell inner membrane. The catalysed reaction is Na(+)(in) + 2 H(+)(out) = Na(+)(out) + 2 H(+)(in). Na(+)/H(+) antiporter that extrudes sodium in exchange for external protons. The polypeptide is Na(+)/H(+) antiporter NhaA (Legionella pneumophila (strain Corby)).